A 1907-amino-acid chain; its full sequence is Probable RNA-directed RNA polymerase (1907 aa).

The segment at 42–61 is disordered; sequence NTHNDHEETHGESPEVPKAS. Positions 44–56 are enriched in basic and acidic residues; that stretch reads HNDHEETHGESPE.

It belongs to the totiviridae RNA-directed RNA polymerase family.

The enzyme catalyses RNA(n) + a ribonucleoside 5'-triphosphate = RNA(n+1) + diphosphate. Its function is as follows. RNA-dependent RNA polymerase which replicates the viral genome. Catalyzes the transcription of fully conservative plus-strand genomic RNAs that are extruded from the virion into the cytoplasm where they function as mRNAs for translation of viral proteins and also as substrates for encapsidation to form new virions. Once encapsidated, the positive strand is converted to dsRNA by the RNA-directed RNA polymerase. Displays ssRNA-binding activity. This Giardia intestinalis (Giardia lamblia) protein is Probable RNA-directed RNA polymerase (gag-pol).